The primary structure comprises 361 residues: UDP-3-O-acylglucosamine N-acyltransferase (361 aa).

His258 serves as the catalytic Proton acceptor.

Belongs to the transferase hexapeptide repeat family. LpxD subfamily. In terms of assembly, homotrimer.

It catalyses the reaction a UDP-3-O-[(3R)-3-hydroxyacyl]-alpha-D-glucosamine + a (3R)-hydroxyacyl-[ACP] = a UDP-2-N,3-O-bis[(3R)-3-hydroxyacyl]-alpha-D-glucosamine + holo-[ACP] + H(+). The protein operates within bacterial outer membrane biogenesis; LPS lipid A biosynthesis. Its function is as follows. Catalyzes the N-acylation of UDP-3-O-acylglucosamine using 3-hydroxyacyl-ACP as the acyl donor. Is involved in the biosynthesis of lipid A, a phosphorylated glycolipid that anchors the lipopolysaccharide to the outer membrane of the cell. The chain is UDP-3-O-acylglucosamine N-acyltransferase from Nitrobacter hamburgensis (strain DSM 10229 / NCIMB 13809 / X14).